Consider the following 548-residue polypeptide: Chaperonin GroEL (548 aa).

ATP-binding positions include 30–33 (TLGP), Lys51, 87–91 (DGTTT), Gly415, and Asp495.

It belongs to the chaperonin (HSP60) family. As to quaternary structure, forms a cylinder of 14 subunits composed of two heptameric rings stacked back-to-back. Interacts with the co-chaperonin GroES.

It is found in the cytoplasm. The enzyme catalyses ATP + H2O + a folded polypeptide = ADP + phosphate + an unfolded polypeptide.. In terms of biological role, together with its co-chaperonin GroES, plays an essential role in assisting protein folding. The GroEL-GroES system forms a nano-cage that allows encapsulation of the non-native substrate proteins and provides a physical environment optimized to promote and accelerate protein folding. The sequence is that of Chaperonin GroEL from Idiomarina loihiensis (strain ATCC BAA-735 / DSM 15497 / L2-TR).